The primary structure comprises 92 residues: Small ribosomal subunit protein uS19 (92 aa).

This sequence belongs to the universal ribosomal protein uS19 family.

Its function is as follows. Protein S19 forms a complex with S13 that binds strongly to the 16S ribosomal RNA. The chain is Small ribosomal subunit protein uS19 from Sulfurovum sp. (strain NBC37-1).